Here is a 270-residue protein sequence, read N- to C-terminus: Phosphonoacetaldehyde hydrolase (270 aa).

Asp11 acts as the Nucleophile in catalysis. 2 residues coordinate Mg(2+): Asp11 and Ala13. Catalysis depends on Lys53, which acts as the Schiff-base intermediate with substrate. Asp187 contributes to the Mg(2+) binding site.

The protein belongs to the HAD-like hydrolase superfamily. PhnX family. Homodimer. Mg(2+) is required as a cofactor.

The catalysed reaction is phosphonoacetaldehyde + H2O = acetaldehyde + phosphate + H(+). Functionally, involved in phosphonate degradation. In Salmonella gallinarum (strain 287/91 / NCTC 13346), this protein is Phosphonoacetaldehyde hydrolase.